The primary structure comprises 138 residues: MLKEFREFAMKGNVVDLAVGVIIGGAFGAIVTSLVGDIIMPIIGAITGGLDFSNYFIPLAKSVTATNLADAKKQGAVLAYGSFLTLTLNFFIVAFVLFMVIRGMNKLKRRQEAAPAAPPKPSAEVELLTEIRDLLKKA.

3 helical membrane-spanning segments follow: residues 19 to 39, 40 to 60, and 81 to 101; these read VGVI…GDII, MPII…IPLA, and GSFL…FMVI.

Belongs to the MscL family. In terms of assembly, homopentamer.

Its subcellular location is the cell inner membrane. Functionally, channel that opens in response to stretch forces in the membrane lipid bilayer. May participate in the regulation of osmotic pressure changes within the cell. The polypeptide is Large-conductance mechanosensitive channel (Bradyrhizobium sp. (strain ORS 278)).